We begin with the raw amino-acid sequence, 415 residues long: G patch domain-containing protein 4 (415 aa).

An N-acetylmethionine modification is found at M1. T4 carries the phosphothreonine modification. Residues 11 to 57 (GMKFAEEQLLKHGWTQGKGLGRRENGITQALKVTLKQDNHGVGHDPA) form the G-patch domain. Residue K46 forms a Glycyl lysine isopeptide (Lys-Gly) (interchain with G-Cter in SUMO2) linkage. The residue at position 116 (T116) is a Phosphothreonine. Disordered regions lie at residues 116-141 (TSGE…TPPK) and 191-415 (LGTS…VDLS). Residues 118 to 141 (GEEKPDRDLGNCSDVDNHEPTPPK) are compositionally biased toward basic and acidic residues. S130 carries the phosphoserine modification. Polar residues predominate over residues 191–201 (LGTSQPLTDSE). The span at 224-239 (SLGDELLGHTDRSFRD) shows a compositional bias: basic and acidic residues. The residue at position 258 (S258) is a Phosphoserine. The segment covering 335-345 (EDLDTQEEEGK) has biased composition (acidic residues). Over residues 353-364 (RKVRRKDKRKRQ) the composition is skewed to basic residues. Residues 387–397 (AGERSRQYPKE) show a composition bias toward basic and acidic residues. Positions 398–407 (RAKKKKRKRD) are enriched in basic residues.

This chain is G patch domain-containing protein 4 (Gpatch4), found in Mus musculus (Mouse).